We begin with the raw amino-acid sequence, 76 residues long: Pigment-dispersing hormone A peptides (76 aa).

The N-terminal stretch at 1–20 (MRSAMVVLVLVAMVAVFTRA) is a signal peptide. Residue Ala-73 is modified to Alanine amide.

It belongs to the arthropod PDH family. In terms of tissue distribution, optical ganglia of the eyestalk.

The protein localises to the secreted. In terms of biological role, the pigment-dispersing hormone causes the migration of the distal retinal pigment into the proximal end of the pigment chromatophore cells and thus decreases the amount of light entering the retinulas. May also function as a neurotransmitter and/or neuromodulator. The chain is Pigment-dispersing hormone A peptides from Faxonius limosus (Spinycheek crayfish).